We begin with the raw amino-acid sequence, 651 residues long: Peptide-N(4)-(N-acetyl-beta-glucosaminyl)asparagine amidase (651 aa).

The 62-residue stretch at 29–90 folds into the PUB domain; the sequence is EASRLLLTYA…EGETHMVFPK (62 aa). Zn(2+) is bound by residues Cys246, Cys249, Cys279, and Cys282. Cys305 serves as the catalytic Nucleophile. Residues His332 and Asp349 contribute to the active site. Residues 450–651 form the PAW domain; that stretch reads EFGGRTSGSM…LEMIIKLADL (202 aa).

It belongs to the transglutaminase-like superfamily. PNGase family. Requires Zn(2+) as cofactor.

It is found in the cytoplasm. It catalyses the reaction Hydrolysis of an N(4)-(acetyl-beta-D-glucosaminyl)asparagine residue in which the glucosamine residue may be further glycosylated, to yield a (substituted) N-acetyl-beta-D-glucosaminylamine and a peptide containing an aspartate residue.. Specifically deglycosylates the denatured form of N-linked glycoproteins in the cytoplasm and assists their proteasome-mediated degradation. Cleaves the beta-aspartyl-glucosamine (GlcNAc) of the glycan and the amide side chain of Asn, converting Asn to Asp. Prefers proteins containing high-mannose over those bearing complex type oligosaccharides. Can recognize misfolded proteins in the endoplasmic reticulum that are exported to the cytosol to be destroyed and deglycosylate them, while it has no activity toward native proteins. Deglycosylation is a prerequisite for subsequent proteasome-mediated degradation of some, but not all, misfolded glycoproteins. This chain is Peptide-N(4)-(N-acetyl-beta-glucosaminyl)asparagine amidase (NGLY1), found in Gallus gallus (Chicken).